The following is a 290-amino-acid chain: 4-hydroxybenzoate octaprenyltransferase (290 aa).

A run of 8 helical transmembrane segments spans residues 40–60 (IAGAGTPSLTVIVVFFLGVVI), 99–119 (LALFGGLGLLAFGLVLFLNEL), 120–140 (TFWLSFGGLGLAVLYPFTKRF), 142–162 (FMPQLFLGAAFSWAIPMAFAA), 165–185 (GEVPEIAWLLYVANVLWTVAY), 215–235 (LMIAILQALTLLALIMVGHRL), 239–259 (WPWYAGLVGMSLSFAFQHSLI), and 267–287 (SFHAFLNNHWAGACVFIGLYF).

This sequence belongs to the UbiA prenyltransferase family. Mg(2+) serves as cofactor.

Its subcellular location is the cell inner membrane. It carries out the reaction all-trans-octaprenyl diphosphate + 4-hydroxybenzoate = 4-hydroxy-3-(all-trans-octaprenyl)benzoate + diphosphate. The protein operates within cofactor biosynthesis; ubiquinone biosynthesis. Functionally, catalyzes the prenylation of para-hydroxybenzoate (PHB) with an all-trans polyprenyl group. Mediates the second step in the final reaction sequence of ubiquinone-8 (UQ-8) biosynthesis, which is the condensation of the polyisoprenoid side chain with PHB, generating the first membrane-bound Q intermediate 3-octaprenyl-4-hydroxybenzoate. The protein is 4-hydroxybenzoate octaprenyltransferase of Alcanivorax borkumensis (strain ATCC 700651 / DSM 11573 / NCIMB 13689 / SK2).